The chain runs to 350 residues: GTP 3',8-cyclase (350 aa).

The 219-residue stretch at 27-245 (TFGRIATDLR…LRAHFTLVPD (219 aa)) folds into the Radical SAM core domain. Arginine 36 provides a ligand contact to GTP. 2 residues coordinate [4Fe-4S] cluster: cysteine 43 and cysteine 47. Tyrosine 49 contributes to the S-adenosyl-L-methionine binding site. Cysteine 50 serves as a coordination point for [4Fe-4S] cluster. Arginine 87 contacts GTP. Glycine 91 lines the S-adenosyl-L-methionine pocket. Threonine 118 is a binding site for GTP. Serine 142 serves as a coordination point for S-adenosyl-L-methionine. Position 179 (lysine 179) interacts with GTP. Methionine 213 contributes to the S-adenosyl-L-methionine binding site. Residues cysteine 277 and cysteine 280 each coordinate [4Fe-4S] cluster. 282–284 (RTR) contributes to the GTP binding site. Position 294 (cysteine 294) interacts with [4Fe-4S] cluster.

The protein belongs to the radical SAM superfamily. MoaA family. Monomer and homodimer. [4Fe-4S] cluster serves as cofactor.

The catalysed reaction is GTP + AH2 + S-adenosyl-L-methionine = (8S)-3',8-cyclo-7,8-dihydroguanosine 5'-triphosphate + 5'-deoxyadenosine + L-methionine + A + H(+). It functions in the pathway cofactor biosynthesis; molybdopterin biosynthesis. Its function is as follows. Catalyzes the cyclization of GTP to (8S)-3',8-cyclo-7,8-dihydroguanosine 5'-triphosphate. This Mycobacterium sp. (strain JLS) protein is GTP 3',8-cyclase.